The following is a 202-amino-acid chain: LexA repressor (202 aa).

Positions 32 to 52 (RAEVCSAFGFKSPNAAETHLR) form a DNA-binding region, H-T-H motif. Active-site for autocatalytic cleavage activity residues include S121 and K158.

This sequence belongs to the peptidase S24 family. As to quaternary structure, homodimer.

It carries out the reaction Hydrolysis of Ala-|-Gly bond in repressor LexA.. Represses a number of genes involved in the response to DNA damage (SOS response), including recA and lexA. In the presence of single-stranded DNA, RecA interacts with LexA causing an autocatalytic cleavage which disrupts the DNA-binding part of LexA, leading to derepression of the SOS regulon and eventually DNA repair. This is LexA repressor from Azoarcus sp. (strain BH72).